The following is a 722-amino-acid chain: Bifunctional UDP-N-acetylglucosamine 2-epimerase/N-acetylmannosamine kinase (722 aa).

Arg19, Ser23, Arg113, His220, and Asn253 together coordinate UDP. CMP-N-acetyl-beta-neuraminate contacts are provided by Lys259, Glu271, Lys280, and His281. Residues Val282, Ser301, Ser302, Glu307, and Arg321 each contribute to the UDP site. The interval 406–722 is N-acetylmannosamine kinase; the sequence is TLSALAVDLG…VLDYTTRRIH (317 aa). Mg(2+) is bound at residue Asp413. An an N-acyl-D-mannosamine 6-phosphate-binding site is contributed by Gly416. Positions 417, 418, and 420 each coordinate ADP. Positions 476, 477, 489, 516, 517, and 545 each coordinate an N-acyl-D-mannosamine 6-phosphate. Residues Gly476, Arg477, Thr489, Asn516, and Asp517 each coordinate an N-acyl-D-mannosamine. Asp517 is a catalytic residue. The an N-acyl-D-mannosamine site is built by Glu566 and His569. His569 lines the an N-acyl-D-mannosamine 6-phosphate pocket. His569, Cys579, Cys581, and Cys586 together coordinate Zn(2+). An N-acyl-D-mannosamine 6-phosphate is bound at residue Glu588. Position 588 (Glu588) interacts with an N-acyl-D-mannosamine.

This sequence in the N-terminal section; belongs to the UDP-N-acetylglucosamine 2-epimerase family. It in the C-terminal section; belongs to the ROK (NagC/XylR) family. As to quaternary structure, homodimer. Homotetramer. Homohexamer. The hexameric form exhibits both enzyme activities, whereas the dimeric form only catalyzes the phosphorylation of N-acyl-D-mannosamine. In terms of processing, phosphorylated. Phosphorylation by PKC activates the UDP-N-acetylglucosamine 2-epimerase activity. In terms of tissue distribution, widely expressed. Highest expression in liver. Also found at high levels in lung, brain and kidney.

It localises to the cytoplasm. The protein resides in the cytosol. The enzyme catalyses UDP-N-acetyl-alpha-D-glucosamine + H2O = aldehydo-N-acetyl-D-mannosamine + UDP + H(+). The catalysed reaction is an N-acyl-D-mannosamine + ATP = an N-acyl-D-mannosamine 6-phosphate + ADP + H(+). It functions in the pathway amino-sugar metabolism; N-acetylneuraminate biosynthesis. With respect to regulation, the UDP-N-acetylglucosamine 2-epimerase activity, in contrast to the N-acetylmannosamine kinase activity, exhibits allosteric regulation by cytidine monophosphate-N-acetylneuraminic acid (CMP-Neu5Ac), the end product of neuraminic acid biosynthesis. Moreover, the activity is contingent upon the oligomeric state of the enzyme. The monomeric form is inactive, while the dimeric form selectively catalyzes the phosphorylation of N-acetylmannosamine. The hexameric form, on the other hand, demonstrates full proficiency in both enzyme activities. Furthermore, the UDP-N-acetylglucosamine 2-epimerase activity is increased by PKC-mediated phosphorylation. Functionally, bifunctional enzyme that possesses both UDP-N-acetylglucosamine 2-epimerase and N-acetylmannosamine kinase activities, and serves as the initiator of the biosynthetic pathway leading to the production of N-acetylneuraminic acid (NeuAc), a critical precursor in the synthesis of sialic acids. By catalyzing this pivotal and rate-limiting step in sialic acid biosynthesis, this enzyme assumes a pivotal role in governing the regulation of cell surface sialylation, playing a role in embryonic angiogenesis. Sialic acids represent a category of negatively charged sugars that reside on the surface of cells as terminal components of glycoconjugates and mediate important functions in various cellular processes, including cell adhesion, signal transduction, and cellular recognition. The sequence is that of Bifunctional UDP-N-acetylglucosamine 2-epimerase/N-acetylmannosamine kinase from Mus musculus (Mouse).